The sequence spans 217 residues: uncharacterized protein (217 aa).

6 consecutive transmembrane segments (helical) span residues 13-35, 50-68, 75-94, 109-131, 152-174, and 194-216; these read IWLTSTLLAMKYLTPLNLAIALL, FSLVFPILLSALAAYILYL, FLLAYSILFIALKFVNEWRI, MMALAYGAGLMEILAPLTLLFSL, YLAIIPLALIFYILSHPVLAAAV, and GFSLLFLNLLFVVGFLALDFAGL.

The protein localises to the cell membrane. This is an uncharacterized protein from Archaeoglobus fulgidus (strain ATCC 49558 / DSM 4304 / JCM 9628 / NBRC 100126 / VC-16).